Reading from the N-terminus, the 612-residue chain is Zinc metalloproteinase-disintegrin-like 2d (612 aa).

The N-terminal stretch at Met-1–Ser-20 is a signal peptide. A propeptide spanning residues Ile-21–Pro-189 is cleaved from the precursor. The region spanning Lys-199–Pro-395 is the Peptidase M12B domain. Glu-202 is a binding site for Ca(2+). An N-linked (GlcNAc...) asparagine glycan is attached at Asn-218. Residue Asp-286 coordinates Ca(2+). Cystine bridges form between Cys-310–Cys-390, Cys-350–Cys-374, and Cys-352–Cys-357. Zn(2+) is bound at residue His-335. Glu-336 is an active-site residue. Zn(2+) is bound by residues His-339 and His-345. Residues Cys-390, Asn-393, Val-405, Asn-408, Phe-410, Glu-412, Glu-415, and Asp-418 each coordinate Ca(2+). The region spanning Pro-403–Asn-489 is the Disintegrin domain. Cystine bridges form between Cys-406-Cys-435, Cys-417-Cys-430, Cys-419-Cys-425, Cys-429-Cys-452, Cys-443-Cys-449, Cys-448-Cys-474, Cys-461-Cys-481, Cys-468-Cys-500, Cys-493-Cys-505, Cys-512-Cys-562, Cys-527-Cys-573, Cys-540-Cys-550, Cys-557-Cys-599, and Cys-593-Cys-605. The D/ECD-tripeptide signature appears at Glu-467–Asp-469.

This sequence belongs to the venom metalloproteinase (M12B) family. P-III subfamily. Zn(2+) is required as a cofactor. As to expression, expressed by the venom gland.

Its subcellular location is the secreted. Its function is as follows. Snake venom metalloproteinase that impairs hemostasis in the envenomed animal. The sequence is that of Zinc metalloproteinase-disintegrin-like 2d from Crotalus adamanteus (Eastern diamondback rattlesnake).